The sequence spans 351 residues: MTNSIRIGTRKSPLALIHTNLVIQQIKQFFPDINCEIVPIITSGDLIQNKPLYDIGGKALFLKEIEQALLDKKIDLAVHSLKDVPGRIPEPLVIAAVLEREDPRDVFVCLKYKSIEELPQNAVIGSSAVRRKAFIQKIRPDLKVTVFRGNVDSRIKKLMTGEVDATILAYTGLKRLEVFNPEYCHLIEYSQMLPCIGQGVIAVEIRKDDNAMLEICNQINHLPTFELIKPERAFLEYLDANCRTPIAAYSQYLDANPRHLSKLAYREVFEGNTEALATAAYKSNRTDASTGLTYKLPLEVEFGKMYNIQTNFMLGNLDGSKITFHTETTNIKTSTEAGIKAAKMMLEAICK.

Position 242 is an S-(dipyrrolylmethanemethyl)cysteine (Cys-242).

Belongs to the HMBS family. Monomer. The cofactor is dipyrromethane.

The enzyme catalyses 4 porphobilinogen + H2O = hydroxymethylbilane + 4 NH4(+). The protein operates within porphyrin-containing compound metabolism; protoporphyrin-IX biosynthesis; coproporphyrinogen-III from 5-aminolevulinate: step 2/4. Its function is as follows. Tetrapolymerization of the monopyrrole PBG into the hydroxymethylbilane pre-uroporphyrinogen in several discrete steps. The polypeptide is Porphobilinogen deaminase (Rickettsia peacockii (strain Rustic)).